The primary structure comprises 471 residues: Glutamate--tRNA ligase (471 aa).

The 'HIGH' region motif lies at 9–19 (PSPTGYLHVGG). Residues Cys-98, Cys-100, Cys-125, and His-127 each contribute to the Zn(2+) site. A 'KMSKS' region motif is present at residues 237–241 (KLSKR). Residue Lys-240 participates in ATP binding.

Belongs to the class-I aminoacyl-tRNA synthetase family. Glutamate--tRNA ligase type 1 subfamily. In terms of assembly, monomer. The cofactor is Zn(2+).

It is found in the cytoplasm. The enzyme catalyses tRNA(Glu) + L-glutamate + ATP = L-glutamyl-tRNA(Glu) + AMP + diphosphate. Catalyzes the attachment of glutamate to tRNA(Glu) in a two-step reaction: glutamate is first activated by ATP to form Glu-AMP and then transferred to the acceptor end of tRNA(Glu). This is Glutamate--tRNA ligase from Salmonella gallinarum (strain 287/91 / NCTC 13346).